Consider the following 429-residue polypeptide: Enolase (429 aa).

Gln-162 lines the (2R)-2-phosphoglycerate pocket. Glu-204 acts as the Proton donor in catalysis. Asp-241, Glu-283, and Asp-310 together coordinate Mg(2+). Lys-335, Arg-364, Ser-365, and Lys-386 together coordinate (2R)-2-phosphoglycerate. Lys-335 (proton acceptor) is an active-site residue.

The protein belongs to the enolase family. Mg(2+) serves as cofactor.

It is found in the cytoplasm. Its subcellular location is the secreted. The protein resides in the cell surface. It carries out the reaction (2R)-2-phosphoglycerate = phosphoenolpyruvate + H2O. The protein operates within carbohydrate degradation; glycolysis; pyruvate from D-glyceraldehyde 3-phosphate: step 4/5. In terms of biological role, catalyzes the reversible conversion of 2-phosphoglycerate (2-PG) into phosphoenolpyruvate (PEP). It is essential for the degradation of carbohydrates via glycolysis. The polypeptide is Enolase (Mycobacterium tuberculosis (strain ATCC 25177 / H37Ra)).